The following is a 660-amino-acid chain: Bifunctional polymyxin resistance protein ArnA (660 aa).

The tract at residues Met1–Phe304 is formyltransferase ArnAFT. Catalysis depends on His104, which acts as the Proton donor; for formyltransferase activity. Residues Arg114 and Thr136–Asp140 contribute to the (6R)-10-formyltetrahydrofolate site. Positions Arg316–Lys660 are dehydrogenase ArnADH. NAD(+) contacts are provided by residues Asp349 and Asp370 to Ile371. Residues Ala395, Tyr400, and Thr434–Ser435 contribute to the UDP-alpha-D-glucuronate site. Glu436 functions as the Proton acceptor; for decarboxylase activity in the catalytic mechanism. Residues Arg462, Asn494, Lys528–Arg537, and Tyr615 contribute to the UDP-alpha-D-glucuronate site. Catalysis depends on Arg621, which acts as the Proton donor; for decarboxylase activity.

It in the N-terminal section; belongs to the Fmt family. UDP-L-Ara4N formyltransferase subfamily. This sequence in the C-terminal section; belongs to the NAD(P)-dependent epimerase/dehydratase family. UDP-glucuronic acid decarboxylase subfamily. In terms of assembly, homohexamer, formed by a dimer of trimers.

The catalysed reaction is UDP-alpha-D-glucuronate + NAD(+) = UDP-beta-L-threo-pentopyranos-4-ulose + CO2 + NADH. It catalyses the reaction UDP-4-amino-4-deoxy-beta-L-arabinose + (6R)-10-formyltetrahydrofolate = UDP-4-deoxy-4-formamido-beta-L-arabinose + (6S)-5,6,7,8-tetrahydrofolate + H(+). Its pathway is nucleotide-sugar biosynthesis; UDP-4-deoxy-4-formamido-beta-L-arabinose biosynthesis; UDP-4-deoxy-4-formamido-beta-L-arabinose from UDP-alpha-D-glucuronate: step 1/3. The protein operates within nucleotide-sugar biosynthesis; UDP-4-deoxy-4-formamido-beta-L-arabinose biosynthesis; UDP-4-deoxy-4-formamido-beta-L-arabinose from UDP-alpha-D-glucuronate: step 3/3. It functions in the pathway bacterial outer membrane biogenesis; lipopolysaccharide biosynthesis. Bifunctional enzyme that catalyzes the oxidative decarboxylation of UDP-glucuronic acid (UDP-GlcUA) to UDP-4-keto-arabinose (UDP-Ara4O) and the addition of a formyl group to UDP-4-amino-4-deoxy-L-arabinose (UDP-L-Ara4N) to form UDP-L-4-formamido-arabinose (UDP-L-Ara4FN). The modified arabinose is attached to lipid A and is required for resistance to polymyxin and cationic antimicrobial peptides. The protein is Bifunctional polymyxin resistance protein ArnA of Shewanella sediminis (strain HAW-EB3).